A 235-amino-acid polypeptide reads, in one-letter code: 2-C-methyl-D-erythritol 4-phosphate cytidylyltransferase (235 aa).

It belongs to the IspD/TarI cytidylyltransferase family. IspD subfamily.

It carries out the reaction 2-C-methyl-D-erythritol 4-phosphate + CTP + H(+) = 4-CDP-2-C-methyl-D-erythritol + diphosphate. The protein operates within isoprenoid biosynthesis; isopentenyl diphosphate biosynthesis via DXP pathway; isopentenyl diphosphate from 1-deoxy-D-xylulose 5-phosphate: step 2/6. Catalyzes the formation of 4-diphosphocytidyl-2-C-methyl-D-erythritol from CTP and 2-C-methyl-D-erythritol 4-phosphate (MEP). The chain is 2-C-methyl-D-erythritol 4-phosphate cytidylyltransferase from Pseudomonas fluorescens (strain ATCC BAA-477 / NRRL B-23932 / Pf-5).